Consider the following 481-residue polypeptide: Cholesterol 16,22-dihydroxylase CYP90G4 (481 aa).

A helical membrane pass occupies residues 4–24 (SYLSFFVLSSILVLTLIFFFM). Cys426 lines the heme pocket.

Belongs to the cytochrome P450 family. As to expression, mainly expressed in leaves and seed pods and, at low levels, in flowers and stems.

The protein localises to the membrane. Its pathway is steroid metabolism; cholesterol metabolism. In terms of biological role, involved in the biosynthesis of spiroketal steroid and saponin natural products from cholesterol such as diosgenin and analogs (e.g. furostanol and spirostanol), plant defense compounds used as main precursors for the industrial production of steroid hormones. During the 5,6-spiroketalization of cholesterol, catalyzes the hydroxylation of cholesterol to form 16S,22S-dihydroxycholesterol and, possibly, the subsequent conversion of 16S,22S-dihydroxycholesterol into 16-oxo-22-hydroxy-cholesterol and 16-hydroxy-22-oxo-cholesterol. 16-hydroxy-22-oxo-cholesterol submit a spontaneous reaction leading to the production of furostanol-type steroid diastereomers, precursors of diosgenin. The protein is Cholesterol 16,22-dihydroxylase CYP90G4 of Trigonella foenum-graecum (Fenugreek).